The primary structure comprises 477 residues: Glycogen synthase (477 aa).

K15 contributes to the ADP-alpha-D-glucose binding site.

Belongs to the glycosyltransferase 1 family. Bacterial/plant glycogen synthase subfamily.

It catalyses the reaction [(1-&gt;4)-alpha-D-glucosyl](n) + ADP-alpha-D-glucose = [(1-&gt;4)-alpha-D-glucosyl](n+1) + ADP + H(+). It functions in the pathway glycan biosynthesis; glycogen biosynthesis. Synthesizes alpha-1,4-glucan chains using ADP-glucose. The chain is Glycogen synthase from Salmonella arizonae (strain ATCC BAA-731 / CDC346-86 / RSK2980).